The chain runs to 260 residues: UPF0246 protein Mmwyl1_3597 (260 aa).

The protein belongs to the UPF0246 family.

In Marinomonas sp. (strain MWYL1), this protein is UPF0246 protein Mmwyl1_3597.